The sequence spans 346 residues: Phosphoribosylformylglycinamidine cyclo-ligase (346 aa).

Belongs to the AIR synthase family.

The protein resides in the cytoplasm. It carries out the reaction 2-formamido-N(1)-(5-O-phospho-beta-D-ribosyl)acetamidine + ATP = 5-amino-1-(5-phospho-beta-D-ribosyl)imidazole + ADP + phosphate + H(+). The protein operates within purine metabolism; IMP biosynthesis via de novo pathway; 5-amino-1-(5-phospho-D-ribosyl)imidazole from N(2)-formyl-N(1)-(5-phospho-D-ribosyl)glycinamide: step 2/2. The chain is Phosphoribosylformylglycinamidine cyclo-ligase from Aliivibrio fischeri (strain ATCC 700601 / ES114) (Vibrio fischeri).